Reading from the N-terminus, the 443-residue chain is Threonine/serine transporter TdcC (443 aa).

The next 11 helical transmembrane spans lie at 22–42 (TTWT…FFPI), 44–64 (AGFG…PIAF), 97–117 (GVVI…IYGV), 140–160 (FVAL…KDLM), 163–183 (VMSY…LSLI), 207–227 (ILVT…FSPI), 259–279 (ASML…FTLS), 319–339 (ASII…LGTL), 366–386 (ISMI…PNIL), 389–409 (IEAM…MYAI), and 423–443 (DNVF…YKLF).

The protein belongs to the amino acid/polyamine transporter 2 family. SdaC/TdcC subfamily.

It localises to the cell inner membrane. The enzyme catalyses L-threonine(in) + H(+)(in) = L-threonine(out) + H(+)(out). It catalyses the reaction L-serine(in) + H(+)(in) = L-serine(out) + H(+)(out). In terms of biological role, involved in the import of threonine and serine into the cell, with the concomitant import of a proton (symport system). The polypeptide is Threonine/serine transporter TdcC (Salmonella newport (strain SL254)).